Reading from the N-terminus, the 592-residue chain is Polyadenylate-binding protein, cytoplasmic and nuclear (592 aa).

A compositionally biased stretch (basic and acidic residues) spans 1-10 (MSDITEKTAE). The interval 1–43 (MSDITEKTAEQLENLQINDDQQPAQSASAPSTSASESEASSVS) is disordered. Over residues 11–20 (QLENLQINDD) the composition is skewed to polar residues. Over residues 21-43 (QQPAQSASAPSTSASESEASSVS) the composition is skewed to low complexity. 4 RRM domains span residues 50-128 (ASLY…WSER), 138-215 (GNIF…MHVP), 231-308 (TNIY…RAQK), and 334-411 (VNLF…IAQR). Positions 507-586 (NQFPRHQQQH…ALAAYENFKK (80 aa)) constitute a PABC domain.

This sequence belongs to the polyadenylate-binding protein type-1 family.

It localises to the cytoplasm. The protein resides in the nucleus. Functionally, binds the poly(A) tail of mRNA. Appears to be an important mediator of the multiple roles of the poly(A) tail in mRNA biogenesis, stability and translation. In the nucleus, involved in both mRNA cleavage and polyadenylation. Is also required for efficient mRNA export to the cytoplasm. Acts in concert with a poly(A)-specific nuclease (PAN) to affect poly(A) tail shortening, which may occur concomitantly with either nucleocytoplasmic mRNA transport or translational initiation. In the cytoplasm, stimulates translation initiation and regulates mRNA decay through translation termination-coupled poly(A) shortening, probably mediated by PAN. The chain is Polyadenylate-binding protein, cytoplasmic and nuclear (PAB1) from Kluyveromyces lactis (strain ATCC 8585 / CBS 2359 / DSM 70799 / NBRC 1267 / NRRL Y-1140 / WM37) (Yeast).